Here is a 224-residue protein sequence, read N- to C-terminus: Uracil-DNA glycosylase (224 aa).

Catalysis depends on Asp-64, which acts as the Proton acceptor.

The protein belongs to the uracil-DNA glycosylase (UDG) superfamily. UNG family.

It localises to the cytoplasm. It catalyses the reaction Hydrolyzes single-stranded DNA or mismatched double-stranded DNA and polynucleotides, releasing free uracil.. Excises uracil residues from the DNA which can arise as a result of misincorporation of dUMP residues by DNA polymerase or due to deamination of cytosine. The polypeptide is Uracil-DNA glycosylase (Clostridioides difficile (strain 630) (Peptoclostridium difficile)).